The primary structure comprises 240 residues: 4-hydroxy-tetrahydrodipicolinate reductase (240 aa).

Residues 79–81 and 103–106 each bind NAD(+); these read ATT and SANM. H135 acts as the Proton donor/acceptor in catalysis. Position 136 (H136) interacts with (S)-2,3,4,5-tetrahydrodipicolinate. The active-site Proton donor is the K139. 145–146 is a (S)-2,3,4,5-tetrahydrodipicolinate binding site; the sequence is GT.

Belongs to the DapB family.

The protein localises to the cytoplasm. The enzyme catalyses (S)-2,3,4,5-tetrahydrodipicolinate + NAD(+) + H2O = (2S,4S)-4-hydroxy-2,3,4,5-tetrahydrodipicolinate + NADH + H(+). The catalysed reaction is (S)-2,3,4,5-tetrahydrodipicolinate + NADP(+) + H2O = (2S,4S)-4-hydroxy-2,3,4,5-tetrahydrodipicolinate + NADPH + H(+). The protein operates within amino-acid biosynthesis; L-lysine biosynthesis via DAP pathway; (S)-tetrahydrodipicolinate from L-aspartate: step 4/4. Its function is as follows. Catalyzes the conversion of 4-hydroxy-tetrahydrodipicolinate (HTPA) to tetrahydrodipicolinate. The protein is 4-hydroxy-tetrahydrodipicolinate reductase of Staphylococcus aureus (strain MRSA252).